We begin with the raw amino-acid sequence, 520 residues long: Nucleobase-ascorbate transporter 1 (520 aa).

The next 12 membrane-spanning stretches (helical) occupy residues 36–56, 64–84, 86–106, 129–149, 150–170, 174–194, 213–233, 279–299, 362–382, 384–404, 415–435, and 453–473; these read YILM…AMGG, VIQT…LFGT, LPAV…IIND, ALIV…WGLF, SRFF…LGMF, FPQL…VIGL, FPIL…TASG, FAMM…YIAA, GFMI…SIPV, IYAA…LSFL, LMIT…FAQY, and AFLN…AVFM.

The protein belongs to the nucleobase:cation symporter-2 (NCS2) (TC 2.A.40) family. In terms of tissue distribution, expressed in cotyledons 4 days after imbibition (DAI). Expressed in the minor and major veins of cotyledons and leaves, in the shoot apex and pedicels. Expressed in the root meristems, root tips and lateral root primordia.

It localises to the membrane. This is Nucleobase-ascorbate transporter 1 (NAT1) from Arabidopsis thaliana (Mouse-ear cress).